The primary structure comprises 185 residues: Pre-histone-like nucleoprotein (185 aa).

Ser-2 bears the N-acetylserine; by host mark. Positions Ser-2–Gly-23 are excised as a propeptide. Thr-55 is subject to Phosphothreonine; by host. Ser-172 carries the phosphoserine; by host modification. Residues Arg-175–Ser-185 carry the Nuclear localization signal motif.

It belongs to the adenoviridae histone-like nucleoprotein family. In terms of assembly, interacts with the core-capsid bridging protein; this interaction bridges the virus core to the capsid. Interacts with host NPM1; this interaction might play a role in placing the pre-histone-like nucleoprotein on the viral DNA or regulating viral gene expression. Interacts with host HMGB1; this interaction inhibits host immune response. Cleaved near the N-terminus by the viral protease during virion maturation to form the mature protein.

It is found in the virion. Its subcellular location is the host nucleus. The protein resides in the host nucleolus. Plays a role in the inhibition of host immune response within the nucleus. Interacts with cellular nucleosomes and immobilizes the host immune danger signal HMGB1 on chromatin. In turn, prevents HMGB1 release out of the cell and thus decreases inflammation. Also plays a role in the wrapping and condensation of the viral DNA. May also promote viral genome import into the nucleus. This Human adenovirus F serotype 40 (HAdV-40) protein is Pre-histone-like nucleoprotein.